A 177-amino-acid polypeptide reads, in one-letter code: Large ribosomal subunit protein uL6 (177 aa).

This sequence belongs to the universal ribosomal protein uL6 family. As to quaternary structure, part of the 50S ribosomal subunit.

In terms of biological role, this protein binds to the 23S rRNA, and is important in its secondary structure. It is located near the subunit interface in the base of the L7/L12 stalk, and near the tRNA binding site of the peptidyltransferase center. The sequence is that of Large ribosomal subunit protein uL6 from Leptothrix cholodnii (strain ATCC 51168 / LMG 8142 / SP-6) (Leptothrix discophora (strain SP-6)).